Here is a 212-residue protein sequence, read N- to C-terminus: Endonuclease III (212 aa).

Residues 108–127 (FKELVKLPGVGRKTANVVLN) form the HhH domain. Positions 187, 194, 197, and 203 each coordinate [4Fe-4S] cluster.

It belongs to the Nth/MutY family. [4Fe-4S] cluster is required as a cofactor.

It catalyses the reaction 2'-deoxyribonucleotide-(2'-deoxyribose 5'-phosphate)-2'-deoxyribonucleotide-DNA = a 3'-end 2'-deoxyribonucleotide-(2,3-dehydro-2,3-deoxyribose 5'-phosphate)-DNA + a 5'-end 5'-phospho-2'-deoxyribonucleoside-DNA + H(+). Functionally, DNA repair enzyme that has both DNA N-glycosylase activity and AP-lyase activity. The DNA N-glycosylase activity releases various damaged pyrimidines from DNA by cleaving the N-glycosidic bond, leaving an AP (apurinic/apyrimidinic) site. The AP-lyase activity cleaves the phosphodiester bond 3' to the AP site by a beta-elimination, leaving a 3'-terminal unsaturated sugar and a product with a terminal 5'-phosphate. The polypeptide is Endonuclease III (Rickettsia prowazekii (strain Madrid E)).